The sequence spans 210 residues: Imidazoleglycerol-phosphate dehydratase (210 aa).

It belongs to the imidazoleglycerol-phosphate dehydratase family.

The protein resides in the cytoplasm. It carries out the reaction D-erythro-1-(imidazol-4-yl)glycerol 3-phosphate = 3-(imidazol-4-yl)-2-oxopropyl phosphate + H2O. The protein operates within amino-acid biosynthesis; L-histidine biosynthesis; L-histidine from 5-phospho-alpha-D-ribose 1-diphosphate: step 6/9. This chain is Imidazoleglycerol-phosphate dehydratase, found in Mycobacterium marinum (strain ATCC BAA-535 / M).